Consider the following 261-residue polypeptide: Ribonuclease PH (261 aa).

Residues Arg-86 and Gly-124–Arg-126 each bind phosphate.

It belongs to the RNase PH family. As to quaternary structure, homohexameric ring arranged as a trimer of dimers.

The enzyme catalyses tRNA(n+1) + phosphate = tRNA(n) + a ribonucleoside 5'-diphosphate. Functionally, phosphorolytic 3'-5' exoribonuclease that plays an important role in tRNA 3'-end maturation. Removes nucleotide residues following the 3'-CCA terminus of tRNAs; can also add nucleotides to the ends of RNA molecules by using nucleoside diphosphates as substrates, but this may not be physiologically important. Probably plays a role in initiation of 16S rRNA degradation (leading to ribosome degradation) during starvation. This is Ribonuclease PH from Persephonella marina (strain DSM 14350 / EX-H1).